A 315-amino-acid polypeptide reads, in one-letter code: Phosphate transport system permease protein PstC (315 aa).

Topologically, residues 1-22 are cytoplasmic; sequence MLTKSRKYFNQTWIESLFKQTT. A helical transmembrane segment spans residues 23 to 43; it reads ALFALLVFILLAAILISLVIG. Over 44–77 the chain is Periplasmic; the sequence is SWESIKRFGGSFLLETYWDPVQEQYGAIIPILGT. The 229-residue stretch at 74–302 folds into the ABC transmembrane type-1 domain; it reads ILGTLITAGI…VITTMVLILS (229 aa). Residues 78–98 traverse the membrane as a helical segment; it reads LITAGIALFIAVPISFGIAIF. Topologically, residues 99–117 are cytoplasmic; that stretch reads LTELAPNWLKRPISIAIEM. A helical transmembrane segment spans residues 118–138; that stretch reads LAAIPSIIYGMWGLFVFVPLF. Residues 139–164 are Periplasmic-facing; that stretch reads QEHIQPVLIDNLGNLPGLELFFSGVP. Residues 165 to 185 form a helical membrane-spanning segment; that stretch reads FGVGLFTAGLVLAIMIIPFIA. The Cytoplasmic portion of the chain corresponds to 186–223; sequence SVMRDVFSIVPPMLKEGAYGLGATTWEVVRQVIVPHTR. The helical transmembrane segment at 224–244 threads the bilayer; sequence IGLVGSVMLGLGRALGETMAI. Residues 245-281 are Periplasmic-facing; the sequence is TFIIGNSFQLPNSLFSPSTSIASAIANEFNEAGGLQK. The chain crosses the membrane as a helical span at residues 282–302; sequence SALMELGLLLFVITTMVLILS. Topologically, residues 303–315 are cytoplasmic; sequence RLMITKMQQTKGK.

This sequence belongs to the binding-protein-dependent transport system permease family. CysTW subfamily.

It localises to the cell inner membrane. In terms of biological role, part of the binding-protein-dependent transport system for phosphate; probably responsible for the translocation of the substrate across the membrane. This is Phosphate transport system permease protein PstC (pstC) from Haemophilus influenzae (strain ATCC 51907 / DSM 11121 / KW20 / Rd).